The chain runs to 76 residues: MCIKAEKYIEWVKHCQCHGVPLTTYKCPGCGEQIMTQCSPEKEIRDSLTCCPWCSAVFFKQVKGAKVKASAVIQNQ.

It is found in the host cytoplasm. This is an uncharacterized protein from Escherichia phage Mu (Bacteriophage Mu).